Here is a 460-residue protein sequence, read N- to C-terminus: Asparagine--tRNA ligase (460 aa).

The protein belongs to the class-II aminoacyl-tRNA synthetase family. Homodimer.

It is found in the cytoplasm. The catalysed reaction is tRNA(Asn) + L-asparagine + ATP = L-asparaginyl-tRNA(Asn) + AMP + diphosphate + H(+). This is Asparagine--tRNA ligase from Picosynechococcus sp. (strain ATCC 27264 / PCC 7002 / PR-6) (Agmenellum quadruplicatum).